The chain runs to 270 residues: Putative phosphoenolpyruvate synthase regulatory protein (270 aa).

150 to 157 contributes to the ADP binding site; it reads GVSRCGKT.

This sequence belongs to the pyruvate, phosphate/water dikinase regulatory protein family. PSRP subfamily.

It carries out the reaction [pyruvate, water dikinase] + ADP = [pyruvate, water dikinase]-phosphate + AMP + H(+). The catalysed reaction is [pyruvate, water dikinase]-phosphate + phosphate + H(+) = [pyruvate, water dikinase] + diphosphate. Bifunctional serine/threonine kinase and phosphorylase involved in the regulation of the phosphoenolpyruvate synthase (PEPS) by catalyzing its phosphorylation/dephosphorylation. This Aeromonas salmonicida (strain A449) protein is Putative phosphoenolpyruvate synthase regulatory protein.